The primary structure comprises 426 residues: Phosphomethylpyrimidine synthase (426 aa).

Substrate contacts are provided by residues Asn65, Met94, Tyr123, His162, 184-186 (SRG), 225-228 (DGLR), and Glu264. His268 lines the Zn(2+) pocket. Position 291 (Tyr291) interacts with substrate. Residue His332 coordinates Zn(2+). Positions 409, 412, and 416 each coordinate [4Fe-4S] cluster.

The protein belongs to the ThiC family. It depends on [4Fe-4S] cluster as a cofactor.

The enzyme catalyses 5-amino-1-(5-phospho-beta-D-ribosyl)imidazole + S-adenosyl-L-methionine = 4-amino-2-methyl-5-(phosphooxymethyl)pyrimidine + CO + 5'-deoxyadenosine + formate + L-methionine + 3 H(+). The protein operates within cofactor biosynthesis; thiamine diphosphate biosynthesis. Its function is as follows. Catalyzes the synthesis of the hydroxymethylpyrimidine phosphate (HMP-P) moiety of thiamine from aminoimidazole ribotide (AIR) in a radical S-adenosyl-L-methionine (SAM)-dependent reaction. This is Phosphomethylpyrimidine synthase from Thermodesulfovibrio yellowstonii (strain ATCC 51303 / DSM 11347 / YP87).